We begin with the raw amino-acid sequence, 246 residues long: Pyridoxine 5'-phosphate synthase (246 aa).

The 3-amino-2-oxopropyl phosphate site is built by N8 and R19. Residue H44 is the Proton acceptor of the active site. 1-deoxy-D-xylulose 5-phosphate contacts are provided by R46 and H51. E76 (proton acceptor) is an active-site residue. Residue T106 coordinates 1-deoxy-D-xylulose 5-phosphate. Residue H198 is the Proton donor of the active site. 3-amino-2-oxopropyl phosphate-binding positions include D199 and 221–222 (GH).

It belongs to the PNP synthase family. Homooctamer; tetramer of dimers.

The protein resides in the cytoplasm. The enzyme catalyses 3-amino-2-oxopropyl phosphate + 1-deoxy-D-xylulose 5-phosphate = pyridoxine 5'-phosphate + phosphate + 2 H2O + H(+). It functions in the pathway cofactor biosynthesis; pyridoxine 5'-phosphate biosynthesis; pyridoxine 5'-phosphate from D-erythrose 4-phosphate: step 5/5. In terms of biological role, catalyzes the complicated ring closure reaction between the two acyclic compounds 1-deoxy-D-xylulose-5-phosphate (DXP) and 3-amino-2-oxopropyl phosphate (1-amino-acetone-3-phosphate or AAP) to form pyridoxine 5'-phosphate (PNP) and inorganic phosphate. This chain is Pyridoxine 5'-phosphate synthase, found in Mesorhizobium japonicum (strain LMG 29417 / CECT 9101 / MAFF 303099) (Mesorhizobium loti (strain MAFF 303099)).